The sequence spans 1235 residues: ATP-dependent helicase/nuclease subunit A (1235 aa).

The UvrD-like helicase ATP-binding domain occupies 12 to 482 (SLWTDDQWKA…IDLSQNFRSR (471 aa)). Residue 33-40 (AAAGSGKT) participates in ATP binding. The UvrD-like helicase C-terminal domain maps to 509-800 (AAELTLGANF…RMMTIHASKG (292 aa)).

Belongs to the helicase family. AddA subfamily. Heterodimer of AddA and AddB/RexB. Mg(2+) serves as cofactor.

The catalysed reaction is Couples ATP hydrolysis with the unwinding of duplex DNA by translocating in the 3'-5' direction.. It catalyses the reaction ATP + H2O = ADP + phosphate + H(+). Functionally, the heterodimer acts as both an ATP-dependent DNA helicase and an ATP-dependent, dual-direction single-stranded exonuclease. Recognizes the chi site generating a DNA molecule suitable for the initiation of homologous recombination. The AddA nuclease domain is required for chi fragment generation; this subunit has the helicase and 3' -&gt; 5' nuclease activities. The protein is ATP-dependent helicase/nuclease subunit A of Listeria monocytogenes serovar 1/2a (strain ATCC BAA-679 / EGD-e).